The primary structure comprises 104 residues: Thioredoxin (104 aa).

The Thioredoxin domain occupies 2-104 (KQVSDASFEE…KLFEWVEASV (103 aa)). Cysteines 29 and 32 form a disulfide.

Belongs to the thioredoxin family.

Participates in various redox reactions through the reversible oxidation of its active center dithiol to a disulfide and catalyzes dithiol-disulfide exchange reactions. The protein is Thioredoxin (trxA) of Rhodospirillum rubrum.